The chain runs to 1051 residues: MLPRKREIVAGEVEDLQKKTRAGEGEATREEGDAAMAGRGNEIDEDLHSRQLAVYGRETMKPLFGSNVLVSGLQGLGAEIAKNLVLAGVKSVTLHDDGNVELWDLSSNFFLSENDVGQNRAQACVQKLQELNNAVLVSALTGDLTKEHLSKFQAVVFTDISLDKAIEFDDYCHSHQPPIAFIKSEVRGLFGSVFCDFGPEFTVLDVDGEEPHTGIVASISNDNPALVSCVDDERLEFQDGDLVVFSEVHGMTELNDGKPRKVKNARPYSFFLEEDTSSFGAYVRGGIVTQVKPPKVIKFKPLKEAMSEPGEFLMSDFSKFERPPLLHLAFQALDKFRTELSRFPVAGSTDDVQRVIEYAISINDTLGDRKLEEIDKKLLHHFASGSRAVLNPMAAMFGGIVGQEVVKACSGKFHPLYQFFYFDSVESLPVDPLEPGDLKPKNSRYDAQISVFGSTLQNKLEEAKIFMVGSGALGCEFLKNLALMGISCSQNGNLTVTDDDVIEKSNLSRQFLFRDWNIGQPKSTVAATAAMVINPKLHVEALQNRASPETENVFNDAFWENLDAVVNALDNVTARMYIDSRCVYFQKPLLESGTLGAKCNTQMVIPHLTENYGASRDPPEKQAPMCTVHSFPHNIDHCLTWARSEFEGLLEKTPTEVNAFLSNPTTYISAARTAGDAQARDQLERVIECLDRDKCETFQDSITWARLKFEDYFSNRVKQLTFTFPEDSMTSSGAPFWSAPKRFPRPVEFSSSDPSQLSFILAAAILRAETFGIPISEWAKTPNKLAAEAVDKVIVPDFQPKQGVKIVTDEKATSLSSASVDDAAVIEELIAKLEEVSKTLPSGFHMNPIQFEKDDDTNFHMDVIAGFANMRARNYSIPEVDKLKAKFIAGRIIPAIATSTAMATGLVCLELYKALAGGHKVEDYRNTFANLAIPLFSIAEPVPPKTIKHQELSWTVWDRWTVTGNITLRELLEWLKEKGLNAYSISCGTSLLYNSMFPRHKERLDRKVVDVAREVAKMEVPSYRRHLDVVVACEDDDDNDVDIPLVSVYFR.

The segment covering 1–32 (MLPRKREIVAGEVEDLQKKTRAGEGEATREEG) has biased composition (basic and acidic residues). The disordered stretch occupies residues 1 to 42 (MLPRKREIVAGEVEDLQKKTRAGEGEATREEGDAAMAGRGNE). 2 tandem repeats follow at residues 56-194 (GRET…GSVF) and 453-605 (GSTL…QMVI). The tract at residues 56 to 605 (GRETMKPLFG…GAKCNTQMVI (550 aa)) is 2 approximate repeats. ATP-binding positions include A472, D498, R509, K522, and 570–571 (DN). C626 functions as the Glycyl thioester intermediate in the catalytic mechanism.

This sequence belongs to the ubiquitin-activating E1 family. As to quaternary structure, monomer.

The enzyme catalyses ATP + ubiquitin + [E1 ubiquitin-activating enzyme]-L-cysteine = AMP + diphosphate + S-ubiquitinyl-[E1 ubiquitin-activating enzyme]-L-cysteine.. Its pathway is protein modification; protein ubiquitination. In terms of biological role, activates ubiquitin by first adenylating its C-terminal glycine residue with ATP, and thereafter linking this residue to the side chain of a cysteine residue in E1, yielding a ubiquitin-E1 thioester and free AMP. This chain is Ubiquitin-activating enzyme E1 2 (UBA2), found in Triticum aestivum (Wheat).